A 120-amino-acid polypeptide reads, in one-letter code: Large ribosomal subunit protein uL18 (120 aa).

Belongs to the universal ribosomal protein uL18 family. In terms of assembly, part of the 50S ribosomal subunit; part of the 5S rRNA/L5/L18/L25 subcomplex. Contacts the 5S and 23S rRNAs.

Functionally, this is one of the proteins that bind and probably mediate the attachment of the 5S RNA into the large ribosomal subunit, where it forms part of the central protuberance. The protein is Large ribosomal subunit protein uL18 of Nitrobacter hamburgensis (strain DSM 10229 / NCIMB 13809 / X14).